Consider the following 471-residue polypeptide: Collagenase 3 (471 aa).

A signal peptide spans methionine 1 to alanine 19. The propeptide at leucine 20–glutamate 103 is activation peptide. The Cysteine switch motif lies at proline 94 to valine 101. Residue cysteine 96 participates in Zn(2+) binding. Asparagine 117 carries an N-linked (GlcNAc...) asparagine glycan. Aspartate 128 contacts Ca(2+). Asparagine 152 carries N-linked (GlcNAc...) asparagine glycosylation. Aspartate 162 is a binding site for Ca(2+). Positions 172 and 174 each coordinate Zn(2+). Residues tyrosine 176 to tyrosine 246 are interaction with TIMP2. Ca(2+) contacts are provided by aspartate 179, glycine 180, serine 182, and leucine 184. Histidine 187 lines the Zn(2+) pocket. Residues asparagine 194, glycine 196, and aspartate 198 each contribute to the Ca(2+) site. Histidine 200 is a Zn(2+) binding site. Ca(2+) is bound by residues aspartate 202, aspartate 203, and glutamate 205. Histidine 222 is a binding site for Zn(2+). Glutamate 223 is a catalytic residue. Positions 226, 232, and 240 each coordinate Zn(2+). A disordered region spans residues glutamine 263–cysteine 284. Residues proline 268–cysteine 471 are interaction with collagen. Residues proline 273–cysteine 284 are compositionally biased toward basic and acidic residues. 4 Hemopexin repeats span residues proline 281–leucine 330, proline 331–lysine 377, valine 379–isoleucine 427, and glycine 428–cysteine 471. A disulfide bridge links cysteine 284 with cysteine 471. Residues aspartate 291, isoleucine 293, aspartate 335, and alanine 337 each contribute to the Ca(2+) site. Phosphotyrosine; by PKDCC is present on tyrosine 366. Positions 383, 385, 432, and 434 each coordinate Ca(2+).

It belongs to the peptidase M10A family. As to quaternary structure, monomer. Interacts with TIMP1, TIMP2 and TIMP3. Binds (via the C-terminal region) to collagen. The cofactor is Ca(2+). Requires Zn(2+) as cofactor. The proenzyme is activated by removal of the propeptide; this cleavage can be effected by other matrix metalloproteinases, such as MMP2, MMP3 and MMP14 and may involve several cleavage steps. Cleavage can also be autocatalytic, after partial maturation by another protease or after treatment with 4-aminophenylmercuric acetate (APMA) (in vitro). Post-translationally, N-glycosylated. In terms of processing, tyrosine phosphorylated by PKDCC/VLK. As to expression, detected in fetal cartilage and calvaria, in chondrocytes of hypertrophic cartilage in vertebrae and in the dorsal end of ribs undergoing ossification, as well as in osteoblasts and periosteal cells below the inner periosteal region of ossified ribs. Detected in chondrocytes from in joint cartilage that have been treated with TNF and IL1B, but not in untreated chondrocytes. Detected in T lymphocytes. Detected in breast carcinoma tissue.

Its subcellular location is the secreted. The protein localises to the extracellular space. The protein resides in the extracellular matrix. Inhibited by TIMP1, TIMP2 and TIMP3. Inhibited by acetohydroxamic acid and other zinc chelators. Functionally, plays a role in the degradation of extracellular matrix proteins including fibrillar collagen, fibronectin, TNC and ACAN. Cleaves triple helical collagens, including type I, type II and type III collagen, but has the highest activity with soluble type II collagen. Can also degrade collagen type IV, type XIV and type X. May also function by activating or degrading key regulatory proteins, such as TGFB1 and CCN2. Plays a role in wound healing, tissue remodeling, cartilage degradation, bone development, bone mineralization and ossification. Required for normal embryonic bone development and ossification. Plays a role in the healing of bone fractures via endochondral ossification. Plays a role in wound healing, probably by a mechanism that involves proteolytic activation of TGFB1 and degradation of CCN2. Plays a role in keratinocyte migration during wound healing. May play a role in cell migration and in tumor cell invasion. This is Collagenase 3 (MMP13) from Homo sapiens (Human).